The primary structure comprises 427 residues: Enolase 1 (427 aa).

(2R)-2-phosphoglycerate is bound at residue Gln162. Glu204 (proton donor) is an active-site residue. Asp241, Glu285, and Asp312 together coordinate Mg(2+). (2R)-2-phosphoglycerate is bound by residues Lys337, Arg366, Ser367, and Lys388. Lys337 serves as the catalytic Proton acceptor.

Belongs to the enolase family. Mg(2+) is required as a cofactor.

It localises to the cytoplasm. Its subcellular location is the secreted. The protein localises to the cell surface. It carries out the reaction (2R)-2-phosphoglycerate = phosphoenolpyruvate + H2O. It functions in the pathway carbohydrate degradation; glycolysis; pyruvate from D-glyceraldehyde 3-phosphate: step 4/5. Functionally, catalyzes the reversible conversion of 2-phosphoglycerate (2-PG) into phosphoenolpyruvate (PEP). It is essential for the degradation of carbohydrates via glycolysis. This is Enolase 1 from Chlorobaculum tepidum (strain ATCC 49652 / DSM 12025 / NBRC 103806 / TLS) (Chlorobium tepidum).